Here is a 363-residue protein sequence, read N- to C-terminus: UDP-N-acetylglucosamine--N-acetylmuramyl-(pentapeptide) pyrophosphoryl-undecaprenol N-acetylglucosamine transferase (363 aa).

UDP-N-acetyl-alpha-D-glucosamine-binding positions include 10 to 12 (TGG), N124, S195, I250, and Q295.

It belongs to the glycosyltransferase 28 family. MurG subfamily.

Its subcellular location is the cell membrane. The catalysed reaction is Mur2Ac(oyl-L-Ala-gamma-D-Glu-L-Lys-D-Ala-D-Ala)-di-trans,octa-cis-undecaprenyl diphosphate + UDP-N-acetyl-alpha-D-glucosamine = beta-D-GlcNAc-(1-&gt;4)-Mur2Ac(oyl-L-Ala-gamma-D-Glu-L-Lys-D-Ala-D-Ala)-di-trans,octa-cis-undecaprenyl diphosphate + UDP + H(+). It participates in cell wall biogenesis; peptidoglycan biosynthesis. Cell wall formation. Catalyzes the transfer of a GlcNAc subunit on undecaprenyl-pyrophosphoryl-MurNAc-pentapeptide (lipid intermediate I) to form undecaprenyl-pyrophosphoryl-MurNAc-(pentapeptide)GlcNAc (lipid intermediate II). The sequence is that of UDP-N-acetylglucosamine--N-acetylmuramyl-(pentapeptide) pyrophosphoryl-undecaprenol N-acetylglucosamine transferase from Lactiplantibacillus plantarum (strain ATCC BAA-793 / NCIMB 8826 / WCFS1) (Lactobacillus plantarum).